Here is a 204-residue protein sequence, read N- to C-terminus: uncharacterized protein (204 aa).

Disordered regions lie at residues 1–37 (MRAL…GSVS) and 159–204 (GYRP…DGEL). The segment covering 28–37 (GRGPRAGSVS) has biased composition (low complexity). The WGR domain occupies 88–175 (PYRLYVERLD…LPKEKWPAEA (88 aa)). Composition is skewed to basic and acidic residues over residues 166-179 (LPKE…EHES) and 188-204 (PEGH…DGEL).

This is an uncharacterized protein from Sinorhizobium fredii (strain NBRC 101917 / NGR234).